The chain runs to 304 residues: Ferrochelatase (304 aa).

Fe cation-binding residues include histidine 169 and glutamate 241.

This sequence belongs to the ferrochelatase family.

The protein resides in the cytoplasm. It catalyses the reaction heme b + 2 H(+) = protoporphyrin IX + Fe(2+). It participates in porphyrin-containing compound metabolism; protoheme biosynthesis; protoheme from protoporphyrin-IX: step 1/1. Functionally, catalyzes the ferrous insertion into protoporphyrin IX. This Thermoplasma volcanium (strain ATCC 51530 / DSM 4299 / JCM 9571 / NBRC 15438 / GSS1) protein is Ferrochelatase.